The following is a 464-amino-acid chain: Putative dipeptidase CPC735_014430 (464 aa).

Residues M1–R34 form a disordered region. A helical transmembrane segment spans residues G40–S56. The Zn(2+) site is built by H93, D95, and E206. Cysteines 145 and 235 form a disulfide. H233 provides a ligand contact to substrate. H277 and H298 together coordinate Zn(2+). Substrate-binding residues include R309 and D369. N382 carries an N-linked (GlcNAc...) asparagine glycan.

This sequence belongs to the metallo-dependent hydrolases superfamily. Peptidase M19 family. Zn(2+) serves as cofactor.

The protein resides in the membrane. The enzyme catalyses an L-aminoacyl-L-amino acid + H2O = 2 an L-alpha-amino acid. In terms of biological role, hydrolyzes a wide range of dipeptides. The polypeptide is Putative dipeptidase CPC735_014430 (Coccidioides posadasii (strain C735) (Valley fever fungus)).